Consider the following 185-residue polypeptide: Probable NEDD8-conjugating enzyme Ubc12-like (185 aa).

Residues 8-29 form a disordered region; sequence KEKQREESQSNNGRGASTVKKQ. The segment covering 16-28 has biased composition (polar residues); sequence QSNNGRGASTVKK. One can recognise a UBC core domain in the interval 31-176; that stretch reads AGELRLHKDI…VRRAMMGGQV (146 aa). C114 functions as the Glycyl thioester intermediate in the catalytic mechanism.

The protein belongs to the ubiquitin-conjugating enzyme family. UBC12 subfamily.

It functions in the pathway protein modification; protein neddylation. Accepts the ubiquitin-like protein NEDD8/RUB1 from the ECR1-AXR1 E1 complex and catalyzes its covalent attachment to other proteins. This Arabidopsis thaliana (Mouse-ear cress) protein is Probable NEDD8-conjugating enzyme Ubc12-like (RCE2).